We begin with the raw amino-acid sequence, 799 residues long: Protein scabrous (799 aa).

Residues 1 to 51 form the signal peptide; the sequence is MRDWQTFPDLQKKKVSRDHLNCPATMAGSNVLWPILLAVVLLQISVAFVSG. A disordered region spans residues 287 to 316; the sequence is TRKDGSSASVEEESGSQEANQEQTGLETTA. The N-linked (GlcNAc...) asparagine glycan is linked to Asn-372. Residues 489–498 show a composition bias toward basic residues; sequence LNKPHKRPHH. The segment at 489–509 is disordered; that stretch reads LNKPHKRPHHQNVQAQMPQDD. Residues 533–737 form the Fibrinogen C-terminal domain; it reads AIINKLPHDC…SSRMLVKRLP (205 aa). A disulfide bridge links Cys-542 with Cys-568. 3 N-linked (GlcNAc...) asparagine glycosylation sites follow: Asn-587, Asn-618, and Asn-660. Residues Cys-687 and Cys-700 are joined by a disulfide bond. Residues Asn-744 and Asn-787 are each glycosylated (N-linked (GlcNAc...) asparagine).

In terms of processing, possesses five pairs of dibasic residues that may be the target of proteolytic processing.

Its subcellular location is the late endosome. In terms of biological role, involved in regulation of neurogenesis. May encode a lateral inhibitor of R8 differentiation. In conjunction with Gp150, promotes Notch activation in response to Delta by regulating acquisition of insensitivity to Delta in a subset of cells. The protein is Protein scabrous (sca) of Drosophila melanogaster (Fruit fly).